A 303-amino-acid polypeptide reads, in one-letter code: UDP-N-acetylenolpyruvoylglucosamine reductase (303 aa).

An FAD-binding PCMH-type domain is found at 32–212; sequence IGGKADLFLN…EQETKEYLAK (181 aa). Arg176 is a catalytic residue. The active-site Proton donor is the Ser226. Glu296 is an active-site residue.

This sequence belongs to the MurB family. The cofactor is FAD.

It localises to the cytoplasm. The enzyme catalyses UDP-N-acetyl-alpha-D-muramate + NADP(+) = UDP-N-acetyl-3-O-(1-carboxyvinyl)-alpha-D-glucosamine + NADPH + H(+). It participates in cell wall biogenesis; peptidoglycan biosynthesis. Functionally, cell wall formation. This Desulforamulus reducens (strain ATCC BAA-1160 / DSM 100696 / MI-1) (Desulfotomaculum reducens) protein is UDP-N-acetylenolpyruvoylglucosamine reductase.